The chain runs to 546 residues: Serine/threonine-protein kinase Chk2 (546 aa).

The segment at Met-1–Ser-70 is disordered. The span at His-8–Ser-70 shows a compositional bias: low complexity. Thr-68 is subject to Phosphothreonine; by MAP3K20. Ser-71 is subject to Phosphoserine; by PLK3. The residue at position 77 (Thr-77) is a Phosphothreonine; by ATM and MAP3K20. Ser-82 bears the Phosphoserine; by PLK3 mark. An FHA domain is found at Tyr-117 to Ile-179. The Protein kinase domain maps to Tyr-224–Leu-490. Residues Gly-231 to Val-238, Lys-253, and Glu-306 to Glu-312 each bind ATP. The Proton acceptor role is filled by Asp-351. ATP-binding positions include Glu-355–Asn-356 and Asp-372. A T-loop/activation segment region spans residues Asp-372–Glu-398. Ser-383 bears the Phosphoserine; by autocatalysis mark. 2 positions are modified to phosphothreonine; by autocatalysis: Thr-387 and Thr-391. At Ser-460 the chain carries Phosphoserine.

Belongs to the protein kinase superfamily. CAMK Ser/Thr protein kinase family. CHK2 subfamily. As to quaternary structure, homodimer. Homodimerization is part of the activation process but the dimer may dissociate following activation. Interacts with PML. Interacts with TP53. Interacts with RB1; phosphorylates RB1. Interacts with BRCA1. Interacts (phosphorylated at Thr-68) with MDC1; requires ATM-mediated phosphorylation of CHEK2. Interacts with TP53BP1; modulates CHEK2 phosphorylation at Thr-68 in response to ionizing radiation. Interacts with CDC25A; phosphorylates CDC25A and mediates its degradation in response to ionizing radiation. Interacts with CUL1; mediates CHEK2 ubiquitination and regulation. Interacts with CDKN2AIP. Interacts (via protein kinase domain) with CCAR2 (via N-terminus). Interacts with SIRT1. The cofactor is Mg(2+). Post-translationally, phosphorylated. Phosphorylated at Ser-82 by PLK3 in response to DNA damage, promoting phosphorylation at Thr-77 by ATM and the G2/M transition checkpoint. Phosphorylation at Thr-77 induces homodimerization. Autophosphorylates at Thr-387 and Thr-391 in the T-loop/activation segment upon dimerization to become fully active. DNA damage-induced autophosphorylation at Ser-383 induces CUL1-mediated ubiquitination and regulates the pro-apoptotic function. Phosphorylation at Ser-460 also regulates ubiquitination. Phosphorylated by PLK4. Ubiquitinated. CUL1-mediated ubiquitination regulates the pro-apoptotic function. Ubiquitination may also regulate protein stability. Ubiquitinated by RNF8 via 'Lys-48'-linked ubiquitination. In terms of tissue distribution, ubiquitously expressed with higher levels in the thymus, spleen and colon (at protein level).

The protein resides in the nucleus. It is found in the PML body. It localises to the nucleoplasm. The catalysed reaction is L-seryl-[protein] + ATP = O-phospho-L-seryl-[protein] + ADP + H(+). It carries out the reaction L-threonyl-[protein] + ATP = O-phospho-L-threonyl-[protein] + ADP + H(+). Activated through phosphorylation at Thr-68 by ATM in response to DNA double-strand breaks. Activation is modulated by several mediators including MDC1 and TP53BP1. Induces homodimerization with exchange of the T-loop/activation segment between protomers and transphosphorylation of the protomers. The autophosphorylated kinase dimer is fully active. Negatively regulated by PPM1D through dephosphorylation of Thr-68. In terms of biological role, serine/threonine-protein kinase which is required for checkpoint-mediated cell cycle arrest, activation of DNA repair and apoptosis in response to the presence of DNA double-strand breaks. May also negatively regulate cell cycle progression during unperturbed cell cycles. Following activation, phosphorylates numerous effectors preferentially at the consensus sequence [L-X-R-X-X-S/T]. Regulates cell cycle checkpoint arrest through phosphorylation of CDC25A, CDC25B and CDC25C, inhibiting their activity. Inhibition of CDC25 phosphatase activity leads to increased inhibitory tyrosine phosphorylation of CDK-cyclin complexes and blocks cell cycle progression. May also phosphorylate NEK6 which is involved in G2/M cell cycle arrest. Regulates DNA repair through phosphorylation of BRCA2, enhancing the association of RAD51 with chromatin which promotes DNA repair by homologous recombination. Also stimulates the transcription of genes involved in DNA repair (including BRCA2) through the phosphorylation and activation of the transcription factor FOXM1. Regulates apoptosis through the phosphorylation of p53/TP53, MDM4 and PML. Phosphorylation of p53/TP53 at 'Ser-20' by CHEK2 may alleviate inhibition by MDM2, leading to accumulation of active p53/TP53. Phosphorylation of MDM4 may also reduce degradation of p53/TP53. Also controls the transcription of pro-apoptotic genes through phosphorylation of the transcription factor E2F1. Tumor suppressor, it may also have a DNA damage-independent function in mitotic spindle assembly by phosphorylating BRCA1. Its absence may be a cause of the chromosomal instability observed in some cancer cells. Promotes the CCAR2-SIRT1 association and is required for CCAR2-mediated SIRT1 inhibition. Under oxidative stress, promotes ATG7 ubiquitination by phosphorylating the E3 ubiquitin ligase TRIM32 at 'Ser-56' leading to positive regulation of the autophagosme assembly. The protein is Serine/threonine-protein kinase Chk2 of Mus musculus (Mouse).